Reading from the N-terminus, the 695-residue chain is uncharacterized protein (695 aa).

This is an uncharacterized protein from Xanthomonas campestris pv. campestris (strain ATCC 33913 / DSM 3586 / NCPPB 528 / LMG 568 / P 25).